The chain runs to 251 residues: Ribosomal RNA small subunit methyltransferase J (251 aa).

S-adenosyl-L-methionine is bound by residues 100–101, 116–117, and D170; these read RD and ER.

Belongs to the methyltransferase superfamily. RsmJ family.

It is found in the cytoplasm. The catalysed reaction is guanosine(1516) in 16S rRNA + S-adenosyl-L-methionine = N(2)-methylguanosine(1516) in 16S rRNA + S-adenosyl-L-homocysteine + H(+). Its function is as follows. Specifically methylates the guanosine in position 1516 of 16S rRNA. The sequence is that of Ribosomal RNA small subunit methyltransferase J from Haemophilus ducreyi (strain 35000HP / ATCC 700724).